A 570-amino-acid chain; its full sequence is Glycine--tRNA ligase (570 aa).

Substrate is bound by residues Arg95 and Glu159. Residues 191–193 (RNE), 201–206 (IRLREF), 312–313 (EV), and 426–429 (GLDR) contribute to the ATP site. 206–210 (FNQAE) is a substrate binding site. Position 422–426 (422–426 (EPSFG)) interacts with substrate.

Belongs to the class-II aminoacyl-tRNA synthetase family.

It localises to the cytoplasm. It catalyses the reaction tRNA(Gly) + glycine + ATP = glycyl-tRNA(Gly) + AMP + diphosphate. Its function is as follows. Catalyzes the attachment of glycine to tRNA(Gly). In Archaeoglobus fulgidus (strain ATCC 49558 / DSM 4304 / JCM 9628 / NBRC 100126 / VC-16), this protein is Glycine--tRNA ligase.